Here is a 253-residue protein sequence, read N- to C-terminus: Ubiquinone/menaquinone biosynthesis C-methyltransferase UbiE (253 aa).

Residues Thr-76, Asp-97, 125 to 126 (NA), and Ser-142 contribute to the S-adenosyl-L-methionine site.

This sequence belongs to the class I-like SAM-binding methyltransferase superfamily. MenG/UbiE family.

The catalysed reaction is a 2-demethylmenaquinol + S-adenosyl-L-methionine = a menaquinol + S-adenosyl-L-homocysteine + H(+). It carries out the reaction a 2-methoxy-6-(all-trans-polyprenyl)benzene-1,4-diol + S-adenosyl-L-methionine = a 5-methoxy-2-methyl-3-(all-trans-polyprenyl)benzene-1,4-diol + S-adenosyl-L-homocysteine + H(+). Its pathway is quinol/quinone metabolism; menaquinone biosynthesis; menaquinol from 1,4-dihydroxy-2-naphthoate: step 2/2. It functions in the pathway cofactor biosynthesis; ubiquinone biosynthesis. Functionally, methyltransferase required for the conversion of demethylmenaquinol (DMKH2) to menaquinol (MKH2) and the conversion of 2-polyprenyl-6-methoxy-1,4-benzoquinol (DDMQH2) to 2-polyprenyl-3-methyl-6-methoxy-1,4-benzoquinol (DMQH2). The polypeptide is Ubiquinone/menaquinone biosynthesis C-methyltransferase UbiE (Xanthomonas axonopodis pv. citri (strain 306)).